A 364-amino-acid chain; its full sequence is Probable dual-specificity RNA methyltransferase RlmN (364 aa).

E107 acts as the Proton acceptor in catalysis. The region spanning H113–D346 is the Radical SAM core domain. A disulfide bond links C120 and C351. The [4Fe-4S] cluster site is built by C127, C131, and C134. S-adenosyl-L-methionine-binding positions include G177–E178, S209, S232–H234, and N308. Catalysis depends on C351, which acts as the S-methylcysteine intermediate.

This sequence belongs to the radical SAM superfamily. RlmN family. Requires [4Fe-4S] cluster as cofactor.

It is found in the cytoplasm. The enzyme catalyses adenosine(2503) in 23S rRNA + 2 reduced [2Fe-2S]-[ferredoxin] + 2 S-adenosyl-L-methionine = 2-methyladenosine(2503) in 23S rRNA + 5'-deoxyadenosine + L-methionine + 2 oxidized [2Fe-2S]-[ferredoxin] + S-adenosyl-L-homocysteine. It catalyses the reaction adenosine(37) in tRNA + 2 reduced [2Fe-2S]-[ferredoxin] + 2 S-adenosyl-L-methionine = 2-methyladenosine(37) in tRNA + 5'-deoxyadenosine + L-methionine + 2 oxidized [2Fe-2S]-[ferredoxin] + S-adenosyl-L-homocysteine. Functionally, specifically methylates position 2 of adenine 2503 in 23S rRNA and position 2 of adenine 37 in tRNAs. Confers resistance to some classes of antibiotics. This chain is Probable dual-specificity RNA methyltransferase RlmN, found in Staphylococcus haemolyticus (strain JCSC1435).